The primary structure comprises 158 residues: UPF0098 protein YbhB (158 aa).

This sequence belongs to the UPF0098 family. In terms of assembly, homodimer.

The protein resides in the cytoplasm. This chain is UPF0098 protein YbhB (ybhB), found in Escherichia coli (strain K12).